A 188-amino-acid chain; its full sequence is MPKASDIKKGSAIEHNGKVFFVKEISKLTPSGRAGATLFRMRMYDVATGSKADESFKADDMINLADFSRRSATFSYVDGNEYVFMDSEDYTPYNFNKEAIEEELLFITEETQGLQILIVDGAPVAIELPSAVDLEIVETAPSIKGASASARTKPATMTTGLTVQVPEYIANGEKVKINTTEHKFMSRA.

It belongs to the elongation factor P family.

The protein is Elongation factor P-like protein of Aliivibrio fischeri (strain MJ11) (Vibrio fischeri).